We begin with the raw amino-acid sequence, 505 residues long: Deoxyguanosinetriphosphate triphosphohydrolase (505 aa).

Residues 66–273 enclose the HD domain; sequence RLTHSMEVQQ…MEAADDISYC (208 aa).

The protein belongs to the dGTPase family. Type 1 subfamily. As to quaternary structure, homotetramer. Mg(2+) is required as a cofactor.

The enzyme catalyses dGTP + H2O = 2'-deoxyguanosine + triphosphate + H(+). Functionally, dGTPase preferentially hydrolyzes dGTP over the other canonical NTPs. This is Deoxyguanosinetriphosphate triphosphohydrolase from Shigella boydii serotype 4 (strain Sb227).